The following is a 219-amino-acid chain: Proteasome subunit beta type-9 (219 aa).

A propeptide spans Met-1 to Gly-20 (removed in mature form). Thr-21 functions as the Nucleophile in the catalytic mechanism. N6-acetyllysine is present on residues Lys-53 and Lys-109.

It belongs to the peptidase T1B family. As to quaternary structure, the 26S proteasome consists of a 20S proteasome core and two 19S regulatory subunits. The 20S proteasome core is composed of 28 subunits that are arranged in four stacked rings, resulting in a barrel-shaped structure. The two end rings are each formed by seven alpha subunits, and the two central rings are each formed by seven beta subunits. The catalytic chamber with the active sites is on the inside of the barrel. Component of the immunoproteasome, where it displaces the equivalent housekeeping subunit PSMB6. Component of the spermatoproteasome, a form of the proteasome specifically found in testis. (Microbial infection) Interacts with HIV-1 TAT protein. Post-translationally, autocleaved. The resulting N-terminal Thr residue of the mature subunit is responsible for the nucleophile proteolytic activity.

Its subcellular location is the cytoplasm. The protein resides in the nucleus. The catalysed reaction is Cleavage of peptide bonds with very broad specificity.. Functionally, the proteasome is a multicatalytic proteinase complex which is characterized by its ability to cleave peptides with Arg, Phe, Tyr, Leu, and Glu adjacent to the leaving group at neutral or slightly basic pH. The proteasome has an ATP-dependent proteolytic activity. This subunit is involved in antigen processing to generate class I binding peptides. Replacement of PSMB6 by PSMB9 increases the capacity of the immunoproteasome to cleave model peptides after hydrophobic and basic residues. The sequence is that of Proteasome subunit beta type-9 (PSMB9) from Homo sapiens (Human).